We begin with the raw amino-acid sequence, 304 residues long: N-acetylmuramic acid 6-phosphate etherase 1 (304 aa).

A compositionally biased stretch (polar residues) spans 1–10 (MENSHLGSLT). Residues 1–20 (MENSHLGSLTTERRNERSKR) form a disordered region. Residues 58-221 (AVGSLKKGGR…STAAMIKMGK (164 aa)) enclose the SIS domain. Glu-86 acts as the Proton donor in catalysis. Glu-117 is an active-site residue.

The protein belongs to the GCKR-like family. MurNAc-6-P etherase subfamily. As to quaternary structure, homodimer.

The enzyme catalyses N-acetyl-D-muramate 6-phosphate + H2O = N-acetyl-D-glucosamine 6-phosphate + (R)-lactate. The protein operates within amino-sugar metabolism; N-acetylmuramate degradation. In terms of biological role, specifically catalyzes the cleavage of the D-lactyl ether substituent of MurNAc 6-phosphate, producing GlcNAc 6-phosphate and D-lactate. This is N-acetylmuramic acid 6-phosphate etherase 1 from Bacillus licheniformis (strain ATCC 14580 / DSM 13 / JCM 2505 / CCUG 7422 / NBRC 12200 / NCIMB 9375 / NCTC 10341 / NRRL NRS-1264 / Gibson 46).